Reading from the N-terminus, the 193-residue chain is Copper-binding lipoprotein NosL (193 aa).

Positions 1–19 (MRTRLRFVLVAAALALLSA) are cleaved as a signal peptide. The N-palmitoyl cysteine moiety is linked to residue Cys-20. Cys-20 carries the S-diacylglycerol cysteine lipid modification.

It belongs to the NosL family. In terms of assembly, monomer. Apo-NosL can form homodimers.

The protein localises to the cell membrane. Functionally, may act as a metallochaperone involved in nitrous oxide reductase assembly. Specifically binds Cu(+). The chain is Copper-binding lipoprotein NosL from Achromobacter cycloclastes.